The primary structure comprises 1046 residues: SWI/SNF-related matrix-associated actin-dependent regulator of chromatin subfamily A member 1 (1046 aa).

The disordered stretch occupies residues 27 to 61 (EQPGPSTFKEEGAAAAATEGTTATEKGEKKEKITS). Residues 39-50 (AAAAATEGTTAT) show a composition bias toward low complexity. Phosphoserine occurs at positions 120 and 123. Residues 199 to 364 (ISLYENGVNG…WALLNFLLPD (166 aa)) enclose the Helicase ATP-binding domain. 212–219 (DEMGLGKT) serves as a coordination point for ATP. A DEAH box motif is present at residues 315 to 318 (DEAH). In terms of domain architecture, Helicase C-terminal spans 494–645 (ALDKLLARIK…SIVIQQGRLI (152 aa)). Residues K654, K720, and K742 each participate in a glycyl lysine isopeptide (Lys-Gly) (interchain with G-Cter in SUMO2) cross-link. The interval 819–840 (AQREEQKKIDGAEPLTPQETEE) is disordered. Residues 820–829 (QREEQKKIDG) are compositionally biased toward basic and acidic residues. In terms of domain architecture, SANT 1 spans 847-899 (QGFTNWTKRDFNQFIKANEKYGRDDIDNIAREVEGKSPEEVMEYSAVFWERCN). Y946 bears the Phosphotyrosine mark. The SANT 2 domain maps to 950–1014 (KGKNYTEEED…QRRCNTLISL (65 aa)). A coiled-coil region spans residues 1003-1037 (EFQRRCNTLISLIEKENMEIEERERAEKKKRATKT). The segment at 1025–1046 (RERAEKKKRATKTPMVKFSAFS) is disordered.

The protein belongs to the SNF2/RAD54 helicase family. ISWI subfamily. In terms of assembly, may form homodimers. Component of the ACF-1 ISWI chromatin remodeling complex at least composed of SMARCA1 and BAZ1A, which regulates the spacing of histone octamers on the DNA template to facilitate access to DNA. Within the complex interacts with BAZ1A; the interaction is direct. Component of the WICH-1 ISWI chromatin remodeling complex at least composed of SMARCA1 and BAZ1B/WSTF. Within the complex interacts with BAZ1B/WSTF. Component of the NoRC-1 ISWI chromatin remodeling complex at least composed of SMARCA1 and BAZ2A/TIP5. Within the complex interacts with BAZ2A/TIP5. Component of the BRF-1 ISWI chromatin remodeling complex at least composed of SMARCA1 and BAZ2B. Within the complex interacts with BAZ2B. Component of the NURF-1 ISWI chromatin remodeling complex (also called the nucleosome-remodeling factor (NURF) complex) at least composed of SMARCA1, BPTF, RBBP4 and RBBP7. Within the complex interacts with BPTF. Within the complex interacts with RBBP4 and RBBP7. Component of the CERF-1 ISWI chromatin remodeling complex (also called the CECR2-containing-remodeling factor (CERF) complex) at least composed of CECR2 and SMARCA1. LUZP1 is detected as part of the CERF-1 complex in embryonic stem cells where it is involved in complex stabilization but is not detected in the complex in the testis. Component of the RSF-1 ISWI chromatin remodeling complex at least composed of SMARCA1 and RSF1. Within the complex interacts with RSF1. Interacts with PRLR. Interacts with ERCC6. In terms of tissue distribution, predominantly expressed in cortex, cerebellum, ovaries, testes, uterus and placenta.

It is found in the nucleus. It catalyses the reaction ATP + H2O = ADP + phosphate + H(+). In terms of biological role, ATPase that possesses intrinsic ATP-dependent chromatin-remodeling activity. ATPase activity is substrate-dependent, and is increased when nucleosomes are the substrate, but is also catalytically active when DNA alone is the substrate. Catalytic subunit of ISWI chromatin-remodeling complexes, which form ordered nucleosome arrays on chromatin and facilitate access to DNA during DNA-templated processes such as DNA replication, transcription, and repair. Within the ISWI chromatin-remodeling complexes, slides edge- and center-positioned histone octamers away from their original location on the DNA template. Catalytic activity and histone octamer sliding propensity is regulated and determined by components of the ISWI chromatin-remodeling complexes. The BAZ1A-, BAZ1B-, BAZ2A- and BAZ2B-containing ISWI chromatin-remodeling complexes regulate the spacing of nucleosomes along the chromatin and have the ability to slide mononucleosomes to the center of a DNA template. The CECR2- and RSF1-containing ISWI chromatin-remodeling complexes do not have the ability to slide mononucleosomes to the center of a DNA template. Within the NURF-1 and CERF-1 ISWI chromatin remodeling complexes, nucleosomes are the preferred substrate for its ATPase activity. Within the NURF-1 ISWI chromatin-remodeling complex, binds to the promoters of En1 and En2 to positively regulate their expression and promote brain development. May promote neurite outgrowth. May be involved in the development of luteal cells. Facilitates nucleosome assembly during DNA replication, ensuring replication fork progression and genomic stability by preventing replication stress and nascent DNA gaps. The sequence is that of SWI/SNF-related matrix-associated actin-dependent regulator of chromatin subfamily A member 1 (Smarca1) from Mus musculus (Mouse).